The primary structure comprises 154 residues: Fibroblast growth factor 2 (154 aa).

Positions 1-9 are excised as a propeptide; that stretch reads MAASGITSL. Residue N35 coordinates heparin. Y81 carries the phosphotyrosine; by TEC modification. K94 is covalently cross-linked (Glycyl lysine isopeptide (Lys-Gly) (interchain with G-Cter in SUMO1)). A heparin-binding region spans residues 127–143; it reads KRTGQYKLGSKTGPGQK.

The protein belongs to the heparin-binding growth factors family. In terms of assembly, monomer. Homodimer. Interacts with FGFR1, FGFR2, FGFR3 and FGFR4. Affinity between fibroblast growth factors (FGFs) and their receptors is increased by heparan sulfate glycosaminoglycans that function as coreceptors. Interacts with CSPG4, FGFBP1 and TEC. Found in a complex with FGFBP1, FGF1 and FGF2. Interacts with FGFBP3. Interacts with integrin ITGAV:ITGB3; the interaction is required for FGF2 signaling. Interacts with SNORC (via the extracellular domain). Interacts with glypican GPC3. Phosphorylation at Tyr-81 regulates FGF2 unconventional secretion.

It localises to the secreted. The protein resides in the nucleus. Its function is as follows. Acts as a ligand for FGFR1, FGFR2, FGFR3 and FGFR4. Also acts as an integrin ligand which is required for FGF2 signaling. Binds to integrin ITGAV:ITGB3. Plays an important role in the regulation of cell survival, cell division, cell differentiation and cell migration. Functions as a potent mitogen in vitro. Can induce angiogenesis. Mediates phosphorylation of ERK1/2 and thereby promotes retinal lens fiber differentiation. The chain is Fibroblast growth factor 2 (Fgf2) from Mus musculus (Mouse).